The sequence spans 415 residues: Metal tolerance protein 5 (415 aa).

Topologically, residues 1 to 124 (MAAAVAGGGE…REKVARSETL (124 aa)) are cytoplasmic. A helical transmembrane segment spans residues 125–145 (AIRLSNIANMVLFAAKVYASV). Residues 146-150 (RSGSL) are Vacuolar-facing. Residues 151-171 (AIIASTLDSLLDLLSGFILWF) form a helical membrane-spanning segment. The Cytoplasmic segment spans residues 172–192 (TAFSMQTPNPYRYPIGKKRMQ). Residues 193–213 (PLGILVFASVMATLGLQIILE) traverse the membrane as a helical segment. The Vacuolar portion of the chain corresponds to 214-232 (SVRSLLSDGDEFSLTKEQE). Residues 233–253 (KWVVDIMLAVTLVKLALVLYC) form a helical membrane-spanning segment. Over 254–268 (RTFTNEIVKAYAQDH) the chain is Cytoplasmic. A helical transmembrane segment spans residues 269 to 291 (FFDVITNMIGLVAALLATYIEGW). Residues 292–293 (ID) are Vacuolar-facing. Residues 294–313 (PVGAIILAIYTIRTWSMTVL) traverse the membrane as a helical segment. Residues 314-415 (ENVHSLVGQS…RPEHALSHEK (102 aa)) are Cytoplasmic-facing.

This sequence belongs to the cation diffusion facilitator (CDF) transporter (TC 2.A.4) family. SLC30A subfamily.

The protein resides in the vacuole membrane. Its function is as follows. Involved in sequestration of excess metal in the cytoplasm into vacuoles to maintain metal homeostasis. This is Metal tolerance protein 5 (MTP5) from Oryza sativa subsp. japonica (Rice).